The chain runs to 306 residues: Secreted RxLR effector protein 76 (306 aa).

Residues 1-21 (MSGAFYVFTALLLVASDQIAA) form the signal peptide. A RxLR-dEER motif is present at residues 48-65 (RFLRGSRDEPDNLANEER). The segment at 105–142 (AAKAVKKRPRGAKAGRKMPRAAEAEAVKKVPRAGTAVK) is disordered. Residues 107-123 (KAVKKRPRGAKAGRKMP) show a composition bias toward basic residues.

The protein belongs to the RxLR effector family.

It is found in the secreted. It localises to the host nucleus. Secreted effector that partially suppresses the host cell death induced by cell death-inducing proteins. This Plasmopara viticola (Downy mildew of grapevine) protein is Secreted RxLR effector protein 76.